Consider the following 155-residue polypeptide: MTVVLDTLVAVRRTAMDLLARREHGRVELTRKLRQRGAEPEMIETALDRLTEEGLLSESRYLESFVSYRARSGYGPARIREELSQRGLQRADIDLALRECGISWQAQLEDTWRRKFSGHLPIDARERAKQGRFLSYRGFSMEMISRLLSGRDMDD.

Belongs to the RecX family.

It localises to the cytoplasm. Its function is as follows. Modulates RecA activity. The sequence is that of Regulatory protein RecX from Pseudomonas fluorescens (strain SBW25).